A 92-amino-acid polypeptide reads, in one-letter code: Small ribosomal subunit protein uS19 (92 aa).

Belongs to the universal ribosomal protein uS19 family.

Functionally, protein S19 forms a complex with S13 that binds strongly to the 16S ribosomal RNA. The sequence is that of Small ribosomal subunit protein uS19 from Malacoplasma penetrans (strain HF-2) (Mycoplasma penetrans).